The chain runs to 310 residues: tRNA methyltransferase 10 homolog B (310 aa).

The stretch at 55–94 forms a coiled coil; it reads RKQRNWERRLEVKKSKRKEEKLRKKLNRQDKDVSDAQLSK. The region spanning 101–298 is the SAM-dependent MTase TRM10-type domain; that stretch reads TKERLEGARA…AGIPPGKGFV (198 aa).

It belongs to the class IV-like SAM-binding methyltransferase superfamily. TRM10 family.

The catalysed reaction is guanosine(9) in tRNA + S-adenosyl-L-methionine = N(1)-methylguanosine(9) in tRNA + S-adenosyl-L-homocysteine + H(+). Its function is as follows. S-adenosyl-L-methionine-dependent guanine N(1)-methyltransferase that catalyzes the formation of N(1)-methylguanine at position 9 (m1G9) in tRNAs. Probably not able to catalyze formation of N(1)-methyladenine at position 9 (m1A9) in tRNAs. This Danio rerio (Zebrafish) protein is tRNA methyltransferase 10 homolog B (trmt10b).